A 95-amino-acid polypeptide reads, in one-letter code: Aspartyl/glutamyl-tRNA(Asn/Gln) amidotransferase subunit C (95 aa).

Belongs to the GatC family. Heterotrimer of A, B and C subunits.

It carries out the reaction L-glutamyl-tRNA(Gln) + L-glutamine + ATP + H2O = L-glutaminyl-tRNA(Gln) + L-glutamate + ADP + phosphate + H(+). It catalyses the reaction L-aspartyl-tRNA(Asn) + L-glutamine + ATP + H2O = L-asparaginyl-tRNA(Asn) + L-glutamate + ADP + phosphate + 2 H(+). Functionally, allows the formation of correctly charged Asn-tRNA(Asn) or Gln-tRNA(Gln) through the transamidation of misacylated Asp-tRNA(Asn) or Glu-tRNA(Gln) in organisms which lack either or both of asparaginyl-tRNA or glutaminyl-tRNA synthetases. The reaction takes place in the presence of glutamine and ATP through an activated phospho-Asp-tRNA(Asn) or phospho-Glu-tRNA(Gln). The chain is Aspartyl/glutamyl-tRNA(Asn/Gln) amidotransferase subunit C from Halothermothrix orenii (strain H 168 / OCM 544 / DSM 9562).